A 246-amino-acid polypeptide reads, in one-letter code: Major prion protein (246 aa).

The first 15 residues, 1-15 (MLVVFVATWSDLGLC), serve as a signal peptide directing secretion. The tract at residues 16 to 223 (KKRPKPGGWN…ESQAYYQRGS (208 aa)) is interaction with GRB2, ERI3 and SYN1. Positions 18 to 100 (RPKPGGWNTG…QWHKPSKPKT (83 aa)) are disordered. Repeat copies occupy residues 44–52 (PQGGGGWGQ), 53–60 (PHGGGWGQ), 61–68 (PHGGGWGQ), 69–76 (PHGGGWGQ), and 77–84 (PHGGGWGQ). The 5 X 8 AA tandem repeats of P-H-G-G-G-W-G-Q stretch occupies residues 44–84 (PQGGGGWGQPHGGGWGQPHGGGWGQPHGGGWGQPHGGGWGQ). A compositionally biased stretch (gly residues) spans 45 to 88 (QGGGGWGQPHGGGWGQPHGGGWGQPHGGGWGQPHGGGWGQGGGT). Residues H54, G55, G56, H62, G63, G64, H70, G71, G72, H78, G79, and G80 each contribute to the Cu(2+) site. Positions 91 to 100 (QWHKPSKPKT) are enriched in basic residues. An intrachain disulfide couples C172 to C207. N-linked (GlcNAc...) asparagine glycans are attached at residues N174 and N190. S223 is lipidated: GPI-anchor amidated serine. Positions 224 to 246 (SMVLFSSPPVILLISFLIFLIVG) are cleaved as a propeptide — removed in mature form.

It belongs to the prion family. In terms of assembly, monomer and homodimer. Has a tendency to aggregate into amyloid fibrils containing a cross-beta spine, formed by a steric zipper of superposed beta-strands. Soluble oligomers may represent an intermediate stage on the path to fibril formation. Copper binding may promote oligomerization. Interacts with GRB2, APP, ERI3/PRNPIP and SYN1. Mislocalized cytosolically exposed PrP interacts with MGRN1; this interaction alters MGRN1 subcellular location and causes lysosomal enlargement. Interacts with KIAA1191.

The protein localises to the cell membrane. It localises to the golgi apparatus. Its primary physiological function is unclear. Has cytoprotective activity against internal or environmental stresses. May play a role in neuronal development and synaptic plasticity. May be required for neuronal myelin sheath maintenance. May play a role in iron uptake and iron homeostasis. Soluble oligomers are toxic to cultured neuroblastoma cells and induce apoptosis (in vitro). Association with GPC1 (via its heparan sulfate chains) targets PRNP to lipid rafts. Also provides Cu(2+) or Zn(2+) for the ascorbate-mediated GPC1 deaminase degradation of its heparan sulfate side chains. The polypeptide is Major prion protein (PRNP) (Erythrocebus patas (Red guenon)).